A 314-amino-acid chain; its full sequence is Versiconal hemiacetal acetate esterase (314 aa).

An Involved in the stabilization of the negatively charged intermediate by the formation of the oxyanion hole motif is present at residues 85 to 87; that stretch reads HGG. Active-site residues include Ser-154, Asp-255, and His-285.

Belongs to the 'GDXG' lipolytic enzyme family.

It carries out the reaction (2S,3S)-versiconal hemiacetal acetate + H2O = (2S-3S)-versiconal hemiacetal + acetate + H(+). The catalysed reaction is (3S)-versiconol acetate + H2O = (S)-versiconol + acetate + H(+). It participates in mycotoxin biosynthesis; aflatoxin biosynthesis. Versiconal hemiacetal acetate esterase; part of the gene cluster that mediates the biosynthesis of aflatoxins, a group of polyketide-derived furanocoumarins, and part of the most toxic and carcinogenic compounds among the known mycotoxins. The four major aflatoxins produced by A.parasiticus are aflatoxin B1 (AFB1), aflatoxin B2 (AFB2), aflatoxin G1 (AFG1) and aflatoxin G2 (AFG2). Within the aflatoxin pathway, the versiconal hemiacetal acetate esterase aflJ converts versiconal hemiacetal acetate (VHA) into versiconal (VAL). The biosynthesis of aflatoxins begins with the norsolorinic acid synthase aflC that combines a hexanoyl starter unit produced by the fatty acid synthase aflA/aflB and 7 malonyl-CoA extender units to synthesize the precursor NOR. The second step is the conversion of NOR to averantin and requires the norsolorinic acid ketoreductase aflD, which catalyzes the dehydration of norsolorinic acid to form (1'S)-averantin. The norsolorinic acid reductases aflE and aflF may also play a role in the conversion of NOR to AVN. The cytochrome P450 monooxygenase aflG then catalyzes the hydroxylation of AVN to 5'hydroxyaverantin (HAVN). The next step is performed by the 5'-hydroxyaverantin dehydrogenase aflH that transforms HAVN to 5'-oxoaverantin (OAVN) which is further converted to averufin (AVF) by aflK that plays a dual role in the pathway, as a 5'-oxoaverantin cyclase that mediates conversion of 5'-oxoaverantin, as well as a versicolorin B synthase in a later step in the pathway. The averufin oxidase aflI catalyzes the conversion of AVF to versiconal hemiacetal acetate (VHA). VHA is then the substrate for the versiconal hemiacetal acetate esterase aflJ to yield versiconal (VAL). Versicolorin B synthase aflK then converts VAL to versicolorin B (VERB) by closing the bisfuran ring of aflatoxin which is required for DNA-binding, thus giving to aflatoxin its activity as a mutagen. Then, the activity of the versicolorin B desaturase aflL leads to versicolorin A (VERA). A branch point starts from VERB since it can also be converted to dihydrodemethylsterigmatocystin (DMDHST), probably also by aflL, VERA being a precursor for aflatoxins B1 and G1, and DMDHST for aflatoxins B2 and G2. Next, the versicolorin reductase aflM and the cytochrome P450 monooxygenase aflN are involved in conversion of VERA to demethylsterigmatocystin (DMST). AflX and aflY seem also involved in this step, through probable aflX-mediated epoxide ring-opening step following versicolorin A oxidation and aflY-mediated Baeyer-Villiger oxidation required for the formation of the xanthone ring. The methyltransferase aflO then leads to the modification of DMST to sterigmatocystin (ST), and of DMDHST to dihydrosterigmatocystin (DHST). Both ST and DHST are then substrates of the O-methyltransferase aflP to yield O-methylsterigmatocystin (OMST) and dihydro-O-methylsterigmatocystin (DHOMST), respectively. Finally OMST is converted to aflatoxins B1 and G1, and DHOMST to aflatoxins B2 and G2, via the action of several enzymes including O-methylsterigmatocystin oxidoreductase aflQ, the cytochrome P450 monooxygenase aflU, but also the NADH-dependent flavin oxidoreductase nadA which is specifically required for the synthesis of AFG1. This is Versiconal hemiacetal acetate esterase from Aspergillus parasiticus (strain ATCC 56775 / NRRL 5862 / SRRC 143 / SU-1).